We begin with the raw amino-acid sequence, 542 residues long: Protein phosphatase 1G (542 aa).

Gly-2 carries N-myristoyl glycine lipidation. Arg-22 carries the omega-N-methylarginine modification. In terms of domain architecture, PPM-type phosphatase spans 26–502 (PYGFSAMQGW…DNMTCIIICF (477 aa)). 2 residues coordinate Mn(2+): Asp-60 and Gly-61. 2 disordered regions span residues 117 to 136 (IAGR…DEDD) and 164 to 325 (CQKV…SDSG). Thr-122 is modified (phosphothreonine). Acidic residues-rich tracts occupy residues 123 to 136 (EDED…DEDD) and 259 to 309 (DSED…DEEM). Lys-380 bears the N6-acetyllysine mark. Positions 438 and 493 each coordinate Mn(2+). The tract at residues 513–542 (ESGKRKLEEALSTEGAEDTGNSDKKKAKRD) is disordered. Ser-524 carries the post-translational modification Phosphoserine.

Belongs to the PP2C family. As to quaternary structure, interacts with NOL3; may dephosphorylate NOL3. Mg(2+) is required as a cofactor. Mn(2+) serves as cofactor. As to expression, highly expressed in testis. Low level of expression in kidney. Also expressed in a number of tissues undergoing proliferation including embryo, uterus at pregnancy, placenta, and ovaries.

It localises to the nucleus. The protein localises to the membrane. It catalyses the reaction O-phospho-L-seryl-[protein] + H2O = L-seryl-[protein] + phosphate. It carries out the reaction O-phospho-L-threonyl-[protein] + H2O = L-threonyl-[protein] + phosphate. Its function is as follows. May be involved in regulation of cell cycle. The polypeptide is Protein phosphatase 1G (Ppm1g) (Mus musculus (Mouse)).